The sequence spans 745 residues: Junction plakoglobin (745 aa).

Met-1 carries the N-acetylmethionine modification. Thr-14 is a glycosylation site (O-linked (GlcNAc) threonine). 2 positions are modified to phosphoserine: Ser-99 and Ser-125. ARM repeat units lie at residues 132-171 (NYQD…QLSK), 172-215 (KEAS…LSHH), 216-255 (REGL…NLLL), 258-297 (EGAK…LLAY), 298-341 (GNQE…LSVC), 342-381 (PSNK…NLSD), 383-420 (ATKQ…NLTC), 423-464 (SKNK…HLTS), 470-510 (EMAQ…NLAL), 512-551 (PANH…QPYT), 574-613 (PMNR…ELAQ), and 615-661 (KEAA…PDYR). Positions 132-297 (NYQDDAELAT…TTDCLQLLAY (166 aa)) are interaction with DSC1 and DSG1. Ser-182 carries the post-translational modification Phosphoserine. The interval 574-661 (PMNRMEIFRL…ISEDKNPDYR (88 aa)) is interaction with DSC1. Phosphoserine occurs at positions 665 and 730.

This sequence belongs to the beta-catenin family. In terms of assembly, homodimer. Component of an E-cadherin/catenin adhesion complex composed of at least E-cadherin/CDH1 and gamma-catenin/JUP, and possibly alpha-catenin/CTNNA1; the complex is located to adherens junctions. The stable association of CTNNA1 is controversial as CTNNA1 was shown not to bind to F-actin when assembled in the complex. Interacts with MUC1. Interacts with CAV1. Interacts with PTPRJ. Interacts with DSG1. Interacts with DSC1 and DSC2. Interacts with PKP2. Interacts with PKP3 (via N-terminus); the interaction is required for PKP3 localization to desmosome cell-cell junctions. Interacts with DSG4. In terms of processing, may be phosphorylated by FER. As to expression, expressed in the heart (at protein level).

Its subcellular location is the cell junction. The protein localises to the adherens junction. It localises to the desmosome. The protein resides in the cytoplasm. It is found in the cytoskeleton. Its subcellular location is the cell membrane. The protein localises to the nucleus. Its function is as follows. Common junctional plaque protein. The membrane-associated plaques are architectural elements in an important strategic position to influence the arrangement and function of both the cytoskeleton and the cells within the tissue. The presence of plakoglobin in both the desmosomes and in the intermediate junctions suggests that it plays a central role in the structure and function of submembranous plaques. Acts as a substrate for VE-PTP and is required by it to stimulate VE-cadherin function in endothelial cells. Can replace beta-catenin in E-cadherin/catenin adhesion complexes which are proposed to couple cadherins to the actin cytoskeleton. This is Junction plakoglobin from Homo sapiens (Human).